The chain runs to 242 residues: Lectin-like protein At1g53060 (242 aa).

Residues 3–237 (FHGDAEYASE…RHEILDWSFE (235 aa)) are legume-lectin like. Ser207 carries the phosphoserine modification.

This sequence belongs to the leguminous lectin family.

This Arabidopsis thaliana (Mouse-ear cress) protein is Lectin-like protein At1g53060.